We begin with the raw amino-acid sequence, 209 residues long: uncharacterized protein (209 aa).

In terms of biological role, may influence the expression of the nuc gene. This is an uncharacterized protein from Shigella flexneri.